The primary structure comprises 95 residues: Integration host factor subunit beta (95 aa).

Belongs to the bacterial histone-like protein family. As to quaternary structure, heterodimer of an alpha and a beta chain.

This protein is one of the two subunits of integration host factor, a specific DNA-binding protein that functions in genetic recombination as well as in transcriptional and translational control. The chain is Integration host factor subunit beta from Erwinia tasmaniensis (strain DSM 17950 / CFBP 7177 / CIP 109463 / NCPPB 4357 / Et1/99).